The following is a 469-amino-acid chain: Protein POLLENLESS 3-LIKE 1 (469 aa).

The tract at residues 1 to 20 is disordered; the sequence is MRRRESRGAKGGGFLTPPPS. TPR repeat units lie at residues 88-121, 124-157, and 184-217; these read DSALKDMVVVLKQLNRFDEGIEAIKSFRYLCPFE, DSIDNLLLELYMKSGRITEVAELLEHKLRTLEQD, and ARILGNLAWVHLQLHNYGIAEQYYRNALSLEPDN. Residues 139 to 191 are a coiled coil; it reads RITEVAELLEHKLRTLEQDKHYGGRIKIAKRSHEEQNNKTIEQEKARILGNLA. Residues 314–338 show a composition bias toward polar residues; that stretch reads NIHKTNSHASSESVEQNSPGLTTQP. The segment at 314 to 339 is disordered; the sequence is NIHKTNSHASSESVEQNSPGLTTQPR.

Belongs to the MS5 protein family. In terms of tissue distribution, expressed in floral and vegetative organs. Also barely detectable in leaves and stems.

Its subcellular location is the nucleus. In terms of biological role, probably involved in the regulation of cell division. This chain is Protein POLLENLESS 3-LIKE 1, found in Arabidopsis thaliana (Mouse-ear cress).